The following is a 94-amino-acid chain: Small ribosomal subunit protein uS17 (94 aa).

It belongs to the universal ribosomal protein uS17 family. In terms of assembly, part of the 30S ribosomal subunit.

One of the primary rRNA binding proteins, it binds specifically to the 5'-end of 16S ribosomal RNA. This is Small ribosomal subunit protein uS17 from Symbiobacterium thermophilum (strain DSM 24528 / JCM 14929 / IAM 14863 / T).